The following is a 287-amino-acid chain: Orotidine 5'-phosphate decarboxylase (287 aa).

Lys-97 acts as the Proton donor in catalysis.

It belongs to the OMP decarboxylase family. Type 2 subfamily.

It carries out the reaction orotidine 5'-phosphate + H(+) = UMP + CO2. Its pathway is pyrimidine metabolism; UMP biosynthesis via de novo pathway; UMP from orotate: step 2/2. The protein is Orotidine 5'-phosphate decarboxylase of Clostridium perfringens (strain SM101 / Type A).